The primary structure comprises 87 residues: CRISPR-associated endoribonuclease Cas2 (87 aa).

D8 contributes to the Mg(2+) binding site.

The protein belongs to the CRISPR-associated endoribonuclease Cas2 protein family. Homodimer, forms a heterotetramer with a Cas1 homodimer. Mg(2+) is required as a cofactor.

CRISPR (clustered regularly interspaced short palindromic repeat), is an adaptive immune system that provides protection against mobile genetic elements (viruses, transposable elements and conjugative plasmids). CRISPR clusters contain sequences complementary to antecedent mobile elements and target invading nucleic acids. CRISPR clusters are transcribed and processed into CRISPR RNA (crRNA). Functions as a ssRNA-specific endoribonuclease. Involved in the integration of spacer DNA into the CRISPR cassette. In Methanosarcina acetivorans (strain ATCC 35395 / DSM 2834 / JCM 12185 / C2A), this protein is CRISPR-associated endoribonuclease Cas2.